A 621-amino-acid chain; its full sequence is Kelch-like protein 40 (621 aa).

The BTB domain maps to 33 to 98; it reads LDCVVRVGER…LYTSEIALDE (66 aa). In terms of domain architecture, BACK spans 133-239; it reads CLAVFRLGLL…PRAFLETRVE (107 aa). Residues 265-298 form a disordered region; it reads LTTLRKKKKEKGEQTARAKEANQGTEDTKAEDDE. Positions 274 to 284 are enriched in basic and acidic residues; it reads EKGEQTARAKE. Kelch repeat units lie at residues 360–412, 413–462, 463–510, 512–557, and 559–613; these read QVFV…EALN, AIYV…SHMD, LVYV…VHDG, IFVA…SLAG, and LYAL…PVRL.

This sequence belongs to the KLHL40 family. As to quaternary structure, component of the BCR(KLHL40) E3 ubiquitin ligase complex, at least composed of CUL3, KLHL40 and RBX1. Interacts with LMOD3. As to expression, specifically expressed in skeletal muscles in embryonic, neonatal and adults. Expressed in various types of muscles, including extensor digitorum longus, gastrocnemius, soleus, diaphragm, masseter and heart (at protein level). Not detected in brain, liver and lung (at protein level).

The protein localises to the cytoplasm. The protein resides in the myofibril. It is found in the sarcomere. Its subcellular location is the a band. It localises to the i band. Its function is as follows. Substrate-specific adapter of a BCR (BTB-CUL3-RBX1) E3 ubiquitin ligase complex that acts as a key regulator of skeletal muscle development. The BCR(KLHL40) complex acts by mediating ubiquitination and degradation of TFDP1, thereby regulating the activity of the E2F:DP transcription factor complex. Promotes stabilization of LMOD3 by acting as a negative regulator of LMOD3 ubiquitination; the molecular process by which it negatively regulates ubiquitination of LMOD3 is however unclear. This Mus musculus (Mouse) protein is Kelch-like protein 40.